A 428-amino-acid chain; its full sequence is Enolase (428 aa).

Glutamine 162 contributes to the (2R)-2-phosphoglycerate binding site. Catalysis depends on glutamate 204, which acts as the Proton donor. Mg(2+) is bound by residues aspartate 241, glutamate 286, and aspartate 313. 4 residues coordinate (2R)-2-phosphoglycerate: lysine 338, arginine 367, serine 368, and lysine 389. Lysine 338 serves as the catalytic Proton acceptor.

This sequence belongs to the enolase family. In terms of assembly, component of the RNA degradosome, a multiprotein complex involved in RNA processing and mRNA degradation. The cofactor is Mg(2+).

The protein resides in the cytoplasm. It is found in the secreted. It localises to the cell surface. The enzyme catalyses (2R)-2-phosphoglycerate = phosphoenolpyruvate + H2O. It participates in carbohydrate degradation; glycolysis; pyruvate from D-glyceraldehyde 3-phosphate: step 4/5. Functionally, catalyzes the reversible conversion of 2-phosphoglycerate (2-PG) into phosphoenolpyruvate (PEP). It is essential for the degradation of carbohydrates via glycolysis. In Vesicomyosocius okutanii subsp. Calyptogena okutanii (strain HA), this protein is Enolase.